A 153-amino-acid polypeptide reads, in one-letter code: UPF0260 protein YcgN (153 aa).

Belongs to the UPF0260 family.

The polypeptide is UPF0260 protein YcgN (Salmonella dublin (strain CT_02021853)).